A 211-amino-acid polypeptide reads, in one-letter code: Thiamine-phosphate synthase (211 aa).

4-amino-2-methyl-5-(diphosphooxymethyl)pyrimidine is bound by residues 37–41 and N69; that span reads QLRIK. The Mg(2+) site is built by D70 and D89. S108 lines the 4-amino-2-methyl-5-(diphosphooxymethyl)pyrimidine pocket. 134 to 136 serves as a coordination point for 2-[(2R,5Z)-2-carboxy-4-methylthiazol-5(2H)-ylidene]ethyl phosphate; the sequence is TQT. K137 is a binding site for 4-amino-2-methyl-5-(diphosphooxymethyl)pyrimidine. Residues G166 and 186 to 187 each bind 2-[(2R,5Z)-2-carboxy-4-methylthiazol-5(2H)-ylidene]ethyl phosphate; that span reads VS.

It belongs to the thiamine-phosphate synthase family. It depends on Mg(2+) as a cofactor.

It catalyses the reaction 2-[(2R,5Z)-2-carboxy-4-methylthiazol-5(2H)-ylidene]ethyl phosphate + 4-amino-2-methyl-5-(diphosphooxymethyl)pyrimidine + 2 H(+) = thiamine phosphate + CO2 + diphosphate. It carries out the reaction 2-(2-carboxy-4-methylthiazol-5-yl)ethyl phosphate + 4-amino-2-methyl-5-(diphosphooxymethyl)pyrimidine + 2 H(+) = thiamine phosphate + CO2 + diphosphate. The catalysed reaction is 4-methyl-5-(2-phosphooxyethyl)-thiazole + 4-amino-2-methyl-5-(diphosphooxymethyl)pyrimidine + H(+) = thiamine phosphate + diphosphate. Its pathway is cofactor biosynthesis; thiamine diphosphate biosynthesis; thiamine phosphate from 4-amino-2-methyl-5-diphosphomethylpyrimidine and 4-methyl-5-(2-phosphoethyl)-thiazole: step 1/1. Its function is as follows. Condenses 4-methyl-5-(beta-hydroxyethyl)thiazole monophosphate (THZ-P) and 2-methyl-4-amino-5-hydroxymethyl pyrimidine pyrophosphate (HMP-PP) to form thiamine monophosphate (TMP). The sequence is that of Thiamine-phosphate synthase from Salmonella agona (strain SL483).